The following is a 203-amino-acid chain: NADH-quinone oxidoreductase subunit C (203 aa).

Belongs to the complex I 30 kDa subunit family. As to quaternary structure, NDH-1 is composed of 14 different subunits. Subunits NuoB, C, D, E, F, and G constitute the peripheral sector of the complex.

The protein resides in the cell inner membrane. The enzyme catalyses a quinone + NADH + 5 H(+)(in) = a quinol + NAD(+) + 4 H(+)(out). In terms of biological role, NDH-1 shuttles electrons from NADH, via FMN and iron-sulfur (Fe-S) centers, to quinones in the respiratory chain. The immediate electron acceptor for the enzyme in this species is believed to be ubiquinone. Couples the redox reaction to proton translocation (for every two electrons transferred, four hydrogen ions are translocated across the cytoplasmic membrane), and thus conserves the redox energy in a proton gradient. In Verminephrobacter eiseniae (strain EF01-2), this protein is NADH-quinone oxidoreductase subunit C.